A 283-amino-acid chain; its full sequence is Phosphatidylserine decarboxylase proenzyme (283 aa).

Catalysis depends on charge relay system; for autoendoproteolytic cleavage activity residues aspartate 88, histidine 145, and serine 248. Serine 248 acts as the Schiff-base intermediate with substrate; via pyruvic acid; for decarboxylase activity in catalysis. The residue at position 248 (serine 248) is a Pyruvic acid (Ser); by autocatalysis.

The protein belongs to the phosphatidylserine decarboxylase family. PSD-B subfamily. Prokaryotic type I sub-subfamily. In terms of assembly, heterodimer of a large membrane-associated beta subunit and a small pyruvoyl-containing alpha subunit. Pyruvate serves as cofactor. Post-translationally, is synthesized initially as an inactive proenzyme. Formation of the active enzyme involves a self-maturation process in which the active site pyruvoyl group is generated from an internal serine residue via an autocatalytic post-translational modification. Two non-identical subunits are generated from the proenzyme in this reaction, and the pyruvate is formed at the N-terminus of the alpha chain, which is derived from the carboxyl end of the proenzyme. The autoendoproteolytic cleavage occurs by a canonical serine protease mechanism, in which the side chain hydroxyl group of the serine supplies its oxygen atom to form the C-terminus of the beta chain, while the remainder of the serine residue undergoes an oxidative deamination to produce ammonia and the pyruvoyl prosthetic group on the alpha chain. During this reaction, the Ser that is part of the protease active site of the proenzyme becomes the pyruvoyl prosthetic group, which constitutes an essential element of the active site of the mature decarboxylase.

The protein resides in the cell membrane. The catalysed reaction is a 1,2-diacyl-sn-glycero-3-phospho-L-serine + H(+) = a 1,2-diacyl-sn-glycero-3-phosphoethanolamine + CO2. Its pathway is phospholipid metabolism; phosphatidylethanolamine biosynthesis; phosphatidylethanolamine from CDP-diacylglycerol: step 2/2. Catalyzes the formation of phosphatidylethanolamine (PtdEtn) from phosphatidylserine (PtdSer). This is Phosphatidylserine decarboxylase proenzyme from Variovorax paradoxus (strain S110).